Here is a 609-residue protein sequence, read N- to C-terminus: Phosphomethylpyrimidine synthase (609 aa).

Substrate contacts are provided by residues Asn219, Met248, Tyr277, His313, 333–335, 374–377, and Glu413; these read SRG and DGLR. His417 provides a ligand contact to Zn(2+). Tyr440 contributes to the substrate binding site. His481 is a binding site for Zn(2+). [4Fe-4S] cluster-binding residues include Cys561, Cys564, and Cys569.

This sequence belongs to the ThiC family. Requires [4Fe-4S] cluster as cofactor.

The catalysed reaction is 5-amino-1-(5-phospho-beta-D-ribosyl)imidazole + S-adenosyl-L-methionine = 4-amino-2-methyl-5-(phosphooxymethyl)pyrimidine + CO + 5'-deoxyadenosine + formate + L-methionine + 3 H(+). It functions in the pathway cofactor biosynthesis; thiamine diphosphate biosynthesis. Catalyzes the synthesis of the hydroxymethylpyrimidine phosphate (HMP-P) moiety of thiamine from aminoimidazole ribotide (AIR) in a radical S-adenosyl-L-methionine (SAM)-dependent reaction. In Deinococcus geothermalis (strain DSM 11300 / CIP 105573 / AG-3a), this protein is Phosphomethylpyrimidine synthase.